Reading from the N-terminus, the 237-residue chain is uncharacterized protein (237 aa).

The Response regulatory domain occupies 3–116; that stretch reads RILLVEDDER…VVMAKIKSVL (114 aa). Residue aspartate 52 is modified to 4-aspartylphosphate. A DNA-binding region (ompR/PhoB-type) is located at residues 131-229; the sequence is SRIVELGGLT…IRGQGYQFQV (99 aa).

Phosphorylated by YvcQ.

Its subcellular location is the cytoplasm. Member of the two-component regulatory system YvcQ/YvcP. This is an uncharacterized protein from Bacillus subtilis (strain 168).